The sequence spans 263 residues: Lens fiber major intrinsic protein (263 aa).

Residues Met1–Phe9 are Cytoplasmic-facing. A helical membrane pass occupies residues Trp10–Gly29. Topologically, residues Ala30–Val41 are extracellular. A helical transmembrane segment spans residues Leu42–Val59. Topologically, residues Gly60–His61 are cytoplasmic. The segment at residues Ile62–Val77 is an intramembrane region (discontinuously helical). The NPA 1 signature appears at Asn68 to Ala70. The Cytoplasmic portion of the chain corresponds to Gly78–Ser82. A helical membrane pass occupies residues Leu83–Ser106. The Extracellular portion of the chain corresponds to Val107 to Val127. A helical membrane pass occupies residues Xaa128–Thr148. At Tyr149–Arg156 the chain is on the cytoplasmic side. The helical transmembrane segment at Leu157–Gly175 threads the bilayer. Topologically, residues Met176 to Tyr178 are extracellular. An intramembrane region (discontinuously helical) is located at residues Thr179–Ile193. The short motif at Asn184 to Ala186 is the NPA 2 element. Residues Leu194–Asn200 are Extracellular-facing. A helical transmembrane segment spans residues His201–Leu222. Residues Leu223–Leu263 lie on the Cytoplasmic side of the membrane. Positions Leu227–Leu237 are interaction with CALM. 2 positions are modified to phosphoserine: Ser235 and Ser243. The interval Lys238–Leu263 is disordered. A deamidated asparagine; by deterioration mark is found at Asn245 and Asn246.

Belongs to the MIP/aquaporin (TC 1.A.8) family. As to quaternary structure, homotetramer; each monomer provides an independent water pore. Two homotetramers on opposing membranes can dimerize, forming a cell-cell junction. Interacts with CALM; the calcium-calmodulin/CALM complex interacts with the cytoplasmic domains of two aquaporins, leading to channel closure. Interacts with BFSP1 (via C-terminus); prevents calcium-dependent inhibition of the water channel activity. In terms of processing, subject to partial proteolytic cleavage in the eye lens core. Partial proteolysis promotes interactions between tetramers from adjoining membranes. Post-translationally, fatty acylated at Met-1 and Lys-238. The acyl modifications, in decreasing order of ion abundance, are: oleoyl (C18:1) &gt; palmitoyl (C16:0) &gt; stearoyl (C18:0) &gt; eicosenoyl (C20:1) &gt; dihomo-gamma-linolenoyl (C20:3) &gt; palmitoleoyl (C16:1) &gt; eicosadienoyl (C20:2). In terms of tissue distribution, detected in eye lens (at protein level).

It localises to the cell membrane. The protein localises to the cell junction. The enzyme catalyses H2O(in) = H2O(out). The water channel activity is inhibited by calcium through calmodulin/CALM. Functionally, aquaporins form homotetrameric transmembrane channels, with each monomer independently mediating water transport across the plasma membrane along its osmotic gradient. Specifically expressed in lens fiber cells, this aquaporin is crucial for maintaining lens water homeostasis and transparency. Beyond water permeability, it also acts as a cell-to-cell adhesion molecule, forming thin junctions between lens fiber cells that are essential for maintaining the ordered structure and transparency of the lens. This Cavia porcellus (Guinea pig) protein is Lens fiber major intrinsic protein.